The following is a 1938-amino-acid chain: Myosin-13 (1938 aa).

One can recognise a Myosin N-terminal SH3-like domain in the interval 33 to 82 (DSKKACFVADNKEMYVKGMIQTRENDKVIVKTLDDRMLTLNNDQVFPMNP). The region spanning 86 to 782 (DKIEDMAMMT…LLGLLEEMRD (697 aa)) is the Myosin motor domain. Position 130 is an N6,N6,N6-trimethyllysine (K130). Residue 179-186 (GESGAGKT) coordinates ATP. Actin-binding stretches follow at residues 659-681 (LNKL…IPNE) and 761-775 (RFGN…GLLG). One can recognise an IQ domain in the interval 785–814 (LVTLMTSTQAVCRGYLMRVEFKKMMERRDS). The stretch at 843 to 1938 (LLKSAEAEKE…RDVGSQKMEE (1096 aa)) forms a coiled coil. The disordered stretch occupies residues 1917–1938 (AESQVNKLRAKSRDVGSQKMEE). The segment covering 1927-1938 (KSRDVGSQKMEE) has biased composition (basic and acidic residues).

Belongs to the TRAFAC class myosin-kinesin ATPase superfamily. Myosin family. In terms of assembly, muscle myosin is a hexameric protein that consists of 2 heavy chain subunits (MHC), 2 alkali light chain subunits (MLC) and 2 regulatory light chain subunits (MLC-2). Specifically expressed in extraocular and laryngeal muscles.

The protein localises to the cytoplasm. Its subcellular location is the myofibril. Fast twitching myosin mediating the high-velocity and low-tension contractions of specific striated muscles. The polypeptide is Myosin-13 (MYH13) (Homo sapiens (Human)).